Here is a 208-residue protein sequence, read N- to C-terminus: RNA chaperone ProQ (208 aa).

Basic and acidic residues predominate over residues 106-127 (SKAKVATRRKEQAKKAREEAKA). Residues 106-154 (SKAKVATRRKEQAKKAREEAKAKKTARAATPPKRRPQPAAKKVEQPVET) form a disordered region.

This sequence belongs to the ProQ family.

The protein resides in the cytoplasm. Functionally, RNA chaperone with significant RNA binding, RNA strand exchange and RNA duplexing activities. This is RNA chaperone ProQ from Aliivibrio fischeri (strain ATCC 700601 / ES114) (Vibrio fischeri).